Reading from the N-terminus, the 354-residue chain is Guanine nucleotide-binding protein alpha-3 subunit (354 aa).

G2 is lipidated: N-myristoyl glycine. C4 carries S-palmitoyl cysteine lipidation. The region spanning 32–354 (KVVKLLLLGA…QANLQGCGLY (323 aa)) is the G-alpha domain. The segment at 35-48 (KLLLLGAGECGKST) is G1 motif. GTP contacts are provided by residues 40–47 (GAGECGKS), 176–182 (LLSRIKT), 201–205 (DVGGQ), 270–273 (NKKD), and A326. Mg(2+) is bound by residues S47 and T182. The interval 174–182 (DILLSRIKT) is G2 motif. Residues 197–206 (FRVFDVGGQR) are G3 motif. The tract at residues 266-273 (ILFLNKKD) is G4 motif. The G5 motif stretch occupies residues 324-329 (TCATDT).

This sequence belongs to the G-alpha family. G(q) subfamily. In terms of assembly, g proteins are composed of 3 units; alpha, beta and gamma. The alpha chain contains the guanine nucleotide binding site.

In terms of biological role, guanine nucleotide-binding proteins (G proteins) are involved as modulators or transducers in various transmembrane signaling systems. Promotes transcription of 3',5'-cyclic phosphodiesterases pde-1 and pde-5, leading to reduced cGMP levels in sensory neurons. This causes suppression of insulin production and signaling which leads to increased daf-16 activity and contributes to increased adult lifespan and resistance to oxidative stress. In addition, by reducing cGMP levels, inhibits TGF-beta signaling pathways. Involved in behavioral response to P.aeruginosa by controlling the expression of daf-7, a member of the TGF-beta family, in ASJ sensory neurons. This is Guanine nucleotide-binding protein alpha-3 subunit (gpa-3) from Caenorhabditis briggsae.